The following is a 126-amino-acid chain: DNA-directed RNA polymerase I subunit RPA12 (126 aa).

Residues cysteine 20, cysteine 23, cysteine 38, cysteine 41, cysteine 87, and cysteine 90 each coordinate Zn(2+). The segment at 20-41 (CSDCGSVLPLPGAQDTVTCIRC) adopts a C4-type zinc-finger fold. The TFIIS-type zinc-finger motif lies at 83–123 (VDRRCPRCGHEGMAYHTRQMRSADEGQTVFYTCTNCKFQEK). Positions 106-107 (DE) match the Hairpin motif. Residues cysteine 115 and cysteine 118 each coordinate Zn(2+).

This sequence belongs to the archaeal RpoM/eukaryotic RPA12/RPB9/RPC11 RNA polymerase family. In terms of assembly, component of the RNA polymerase I (Pol I) complex consisting of 13 subunits: a ten-subunit catalytic core composed of POLR1A/RPA1, POLR1B/RPA2, POLR1C/RPAC1, POLR1D/RPAC2, POLR1H/RPA12, POLR2E/RPABC1, POLR2F/RPABC2, POLR2H/RPABC3, POLR2K/RPABC4 and POLR2L/RPABC5; a mobile stalk subunit POLR1F/RPA43 protruding from the core and additional subunits homologous to general transcription factors POLR1E/RPA49 and POLR1G/RPA34. Part of Pol I pre-initiation complex (PIC), in which Pol I core assembles with RRN3 and promoter-bound UTBF and SL1/TIF-IB complex.

The protein localises to the nucleus. Its subcellular location is the nucleolus. In terms of biological role, core component of RNA polymerase I (Pol I), a DNA-dependent RNA polymerase which synthesizes ribosomal RNA precursors using the four ribonucleoside triphosphates as substrates. Can mediate Pol I proofreading of the nascent RNA transcript. Anchors into the Pol I active site to monitor transcription fidelity and cleave mis-incorporated 5'-ribonucleotides. The sequence is that of DNA-directed RNA polymerase I subunit RPA12 from Homo sapiens (Human).